Consider the following 922-residue polypeptide: Periodic tryptophan protein 2 homolog (922 aa).

WD repeat units follow at residues 12-52, 53-92, 94-132, 141-180, 182-221, 271-310, 313-353, 356-395, 398-439, 443-485, 486-525, 528-567, 590-629, and 691-731; these read GTVY…TLPI, QSKY…VLGE, KFFK…KQPN, THKS…VSYF, VKGS…EMEQ, GVKC…QLYK, ISSH…YILK, GHSY…CYIT, EHEG…NFRT, PNKT…DILS, GHQS…EIRE, QHTS…QIGL, SAGR…LIKK, and KKKQ…DPTD. The segment at 893-922 is disordered; sequence ESKKNKEQEEDQFSDDEETVYQNNKKNKNK. Residues 900-911 are compositionally biased toward acidic residues; it reads QEEDQFSDDEET.

This sequence belongs to the WD repeat PWP2 family. Part of the small subunit (SSU) processome, composed of more than 70 proteins and the RNA chaperone small nucleolar RNA (snoRNA) U3.

The protein resides in the nucleus. It localises to the nucleolus. Functionally, part of the small subunit (SSU) processome, first precursor of the small eukaryotic ribosomal subunit. During the assembly of the SSU processome in the nucleolus, many ribosome biogenesis factors, an RNA chaperone and ribosomal proteins associate with the nascent pre-rRNA and work in concert to generate RNA folding, modifications, rearrangements and cleavage as well as targeted degradation of pre-ribosomal RNA by the RNA exosome. The polypeptide is Periodic tryptophan protein 2 homolog (pwp2) (Dictyostelium discoideum (Social amoeba)).